The following is a 267-amino-acid chain: Aspartate/glutamate leucyltransferase (267 aa).

Residues 246–267 are disordered; that stretch reads EQEEQTRPLFRPSATGFSTGQE.

It belongs to the R-transferase family. Bpt subfamily.

The protein resides in the cytoplasm. It carries out the reaction N-terminal L-glutamyl-[protein] + L-leucyl-tRNA(Leu) = N-terminal L-leucyl-L-glutamyl-[protein] + tRNA(Leu) + H(+). The enzyme catalyses N-terminal L-aspartyl-[protein] + L-leucyl-tRNA(Leu) = N-terminal L-leucyl-L-aspartyl-[protein] + tRNA(Leu) + H(+). In terms of biological role, functions in the N-end rule pathway of protein degradation where it conjugates Leu from its aminoacyl-tRNA to the N-termini of proteins containing an N-terminal aspartate or glutamate. This chain is Aspartate/glutamate leucyltransferase, found in Granulibacter bethesdensis (strain ATCC BAA-1260 / CGDNIH1).